The following is a 269-amino-acid chain: Ribosomal RNA large subunit methyltransferase E (269 aa).

S-adenosyl-L-methionine is bound by residues Gly58, Trp60, Asp78, Asp96, and Asp120. Lys160 serves as the catalytic Proton acceptor. Residues 234–269 form a disordered region; it reads HEKKEGNETSDNDEDNNKNGLMIKKIKELRGKRSKL. Positions 258–269 are enriched in basic and acidic residues; sequence KIKELRGKRSKL.

Belongs to the class I-like SAM-binding methyltransferase superfamily. RNA methyltransferase RlmE family.

The protein resides in the cytoplasm. It catalyses the reaction uridine(2552) in 23S rRNA + S-adenosyl-L-methionine = 2'-O-methyluridine(2552) in 23S rRNA + S-adenosyl-L-homocysteine + H(+). Functionally, specifically methylates the uridine in position 2552 of 23S rRNA at the 2'-O position of the ribose in the fully assembled 50S ribosomal subunit. The polypeptide is Ribosomal RNA large subunit methyltransferase E (Methanococcus aeolicus (strain ATCC BAA-1280 / DSM 17508 / OCM 812 / Nankai-3)).